Consider the following 176-residue polypeptide: Lipoprotein signal peptidase (176 aa).

3 helical membrane-spanning segments follow: residues 12 to 32, 67 to 87, and 94 to 114; these read WYWV…WVLT, WQKW…TIWL, and VWRL…NLID. Residues Asp-123 and Asp-141 contribute to the active site. A helical transmembrane segment spans residues 133-153; that stretch reads HFAAFNIADSAICIGAGLIIL.

Belongs to the peptidase A8 family.

The protein localises to the cell inner membrane. The enzyme catalyses Release of signal peptides from bacterial membrane prolipoproteins. Hydrolyzes -Xaa-Yaa-Zaa-|-(S,diacylglyceryl)Cys-, in which Xaa is hydrophobic (preferably Leu), and Yaa (Ala or Ser) and Zaa (Gly or Ala) have small, neutral side chains.. Its pathway is protein modification; lipoprotein biosynthesis (signal peptide cleavage). Functionally, this protein specifically catalyzes the removal of signal peptides from prolipoproteins. This Shewanella sediminis (strain HAW-EB3) protein is Lipoprotein signal peptidase.